A 396-amino-acid chain; its full sequence is Ribosomal RNA large subunit methyltransferase I (396 aa).

The PUA domain maps to 2–81 (TVSIYLAKGR…EAIDKDFFVR (80 aa)).

This sequence belongs to the methyltransferase superfamily. RlmI family.

The protein resides in the cytoplasm. It catalyses the reaction cytidine(1962) in 23S rRNA + S-adenosyl-L-methionine = 5-methylcytidine(1962) in 23S rRNA + S-adenosyl-L-homocysteine + H(+). In terms of biological role, specifically methylates the cytosine at position 1962 (m5C1962) of 23S rRNA. The chain is Ribosomal RNA large subunit methyltransferase I from Aliivibrio fischeri (strain MJ11) (Vibrio fischeri).